A 323-amino-acid polypeptide reads, in one-letter code: GTP 3',8-cyclase (323 aa).

One can recognise a Radical SAM core domain in the interval 5-228 (GFGRKVDYLR…TVLRDTSSPA (224 aa)). GTP is bound at residue Arg14. Residues Cys21 and Cys25 each coordinate [4Fe-4S] cluster. Tyr27 serves as a coordination point for S-adenosyl-L-methionine. Cys28 contributes to the [4Fe-4S] cluster binding site. Position 64 (Arg64) interacts with GTP. Residue Gly68 coordinates S-adenosyl-L-methionine. A GTP-binding site is contributed by Thr95. Residue Ser119 coordinates S-adenosyl-L-methionine. Lys155 contributes to the GTP binding site. Met189 lines the S-adenosyl-L-methionine pocket. Residues Cys250 and Cys253 each coordinate [4Fe-4S] cluster. 255-257 (RIR) is a binding site for GTP. Cys267 is a binding site for [4Fe-4S] cluster. A compositionally biased stretch (basic and acidic residues) spans 302 to 313 (KNKWSQKDDNEV). The segment at 302–323 (KNKWSQKDDNEVSTRAFYQTGG) is disordered.

It belongs to the radical SAM superfamily. MoaA family. In terms of assembly, monomer and homodimer. Requires [4Fe-4S] cluster as cofactor.

The catalysed reaction is GTP + AH2 + S-adenosyl-L-methionine = (8S)-3',8-cyclo-7,8-dihydroguanosine 5'-triphosphate + 5'-deoxyadenosine + L-methionine + A + H(+). It functions in the pathway cofactor biosynthesis; molybdopterin biosynthesis. Its function is as follows. Catalyzes the cyclization of GTP to (8S)-3',8-cyclo-7,8-dihydroguanosine 5'-triphosphate. In Aliarcobacter butzleri (strain RM4018) (Arcobacter butzleri), this protein is GTP 3',8-cyclase.